Consider the following 375-residue polypeptide: Metal tolerance protein B (375 aa).

Topologically, residues 1–57 (MELEQICILKPDDEEEMESPSPSKTEENLGVVPLSCAFTRQEHCVSETKEREESTRR) are cytoplasmic. Residues 58-78 (LSSLIFLYLIVMSVQIVGGFK) form a helical membrane-spanning segment. The Vacuolar segment spans residues 79-84 (ANSLAV). The chain crosses the membrane as a helical span at residues 85–105 (MTDAAHLLSDVAGLCVSLLAI). At 106 to 122 (KVSSWEANPRNSFGFKR) the chain is on the cytoplasmic side. A helical membrane pass occupies residues 123–143 (LEVLAAFLSVQLIWLVSGVII). Residues 144-160 (HEAIQRLLSRSREVNGE) lie on the Vacuolar side of the membrane. The helical transmembrane segment at 161 to 181 (IMFGISAFGFFMNLVMVLWLG) threads the bilayer. Residues 182–206 (HNHSHHHHDHHHHHHNHKHQHQHHH) form a required for zinc-binding region. Residues 182 to 240 (HNHSHHHHDHHHHHHNHKHQHQHHHKEVVAEEEEEEMNPLKGEKSSSKEMNINIQGAYL) lie on the Cytoplasmic side of the membrane. The chain crosses the membrane as a helical span at residues 241–261 (HAMADMIQSLGVMIGGGIIWV). At 262-264 (KPK) the chain is on the vacuolar side. The chain crosses the membrane as a helical span at residues 265-285 (WVLVDLICTLVFSAFALAATL). The Cytoplasmic segment spans residues 286-375 (PILKNIFGIL…YHATVQVESE (90 aa)).

This sequence belongs to the cation diffusion facilitator (CDF) transporter (TC 2.A.4) family. SLC30A subfamily.

Its subcellular location is the vacuole membrane. Functionally, involved in sequestration of excess zinc in the cytoplasm into vacuoles to maintain zinc homeostasis. In Arabidopsis thaliana (Mouse-ear cress), this protein is Metal tolerance protein B (MTPB).